The chain runs to 379 residues: Alcohol dehydrogenase class-P (379 aa).

At S2 the chain carries N-acetylserine. C47 is a binding site for Zn(2+). T49 is a binding site for an alcohol. T49 lines the NAD(+) pocket. Zn(2+) is bound by residues D50, H69, E70, C99, C102, C105, C113, and C177. Residue H69 participates in an alcohol binding. NAD(+)-binding residues include V206 and D226. S229 is subject to Phosphoserine. NAD(+)-binding residues include R231, T272, V295, V297, T320, F322, and R372.

Belongs to the zinc-containing alcohol dehydrogenase family. Class-P subfamily. As to quaternary structure, homodimer. Requires Zn(2+) as cofactor. Glutathionylated. Root specific. Also detected in etiolated seedlings and leaves in cold conditions.

Its subcellular location is the cytoplasm. The catalysed reaction is a primary alcohol + NAD(+) = an aldehyde + NADH + H(+). It carries out the reaction a secondary alcohol + NAD(+) = a ketone + NADH + H(+). The enzyme catalyses ethanol + NAD(+) = acetaldehyde + NADH + H(+). Alcohol dehydrogenase activity show inverse correlation with the decreasing availability of oxygen. Slightly repressed by thiol-modifying agents N-ethylmaleimide (NEM) and 5,5-dithio-bis-(2-nitrobenzoic acid) (DTNB), as well as by methyl methanethiosulfonate (MMTS) in a dose-dependent manner. Inhibited by hydrogen peroxide H(2)O(2). Functionally, alcohol dehydrogenase catalyzing the reduction of toxic aldehydes to the corresponding alcohols. Mostly active on ethanol (EtOH), but exhibits broad substrate selectivity for primary and secondary alcohols (e.g. cinnamyl alcohol, octanol, geraniol, butanol, propyl alcohol, pentanol, isopentanol, ethylene glycol, isopropanol, methanol and tertiary butyl alcohol). Also catalyzes the reverse reaction to convert allyl alcohol to highly toxic acryl-aldehyde. Required for survival and acclimation in hypoxic conditions, especially in roots. Not able to catalyze NADH-dependent degradation of S-nitrosoglutathione (GSNO). The sequence is that of Alcohol dehydrogenase class-P from Arabidopsis thaliana (Mouse-ear cress).